Reading from the N-terminus, the 289-residue chain is 4-diphosphocytidyl-2-C-methyl-D-erythritol kinase (289 aa).

Residue K16 is part of the active site. 99-109 (PMGGGLGGGSS) lines the ATP pocket. The active site involves D141.

The protein belongs to the GHMP kinase family. IspE subfamily.

It catalyses the reaction 4-CDP-2-C-methyl-D-erythritol + ATP = 4-CDP-2-C-methyl-D-erythritol 2-phosphate + ADP + H(+). It functions in the pathway isoprenoid biosynthesis; isopentenyl diphosphate biosynthesis via DXP pathway; isopentenyl diphosphate from 1-deoxy-D-xylulose 5-phosphate: step 3/6. Catalyzes the phosphorylation of the position 2 hydroxy group of 4-diphosphocytidyl-2C-methyl-D-erythritol. This chain is 4-diphosphocytidyl-2-C-methyl-D-erythritol kinase, found in Ralstonia pickettii (strain 12J).